Here is a 266-residue protein sequence, read N- to C-terminus: Tryptophan synthase alpha chain (266 aa).

Active-site proton acceptor residues include Glu46 and Asp57.

The protein belongs to the TrpA family. As to quaternary structure, tetramer of two alpha and two beta chains.

It catalyses the reaction (1S,2R)-1-C-(indol-3-yl)glycerol 3-phosphate + L-serine = D-glyceraldehyde 3-phosphate + L-tryptophan + H2O. It participates in amino-acid biosynthesis; L-tryptophan biosynthesis; L-tryptophan from chorismate: step 5/5. The alpha subunit is responsible for the aldol cleavage of indoleglycerol phosphate to indole and glyceraldehyde 3-phosphate. The sequence is that of Tryptophan synthase alpha chain from Lacticaseibacillus casei (Lactobacillus casei).